The sequence spans 286 residues: Short-chain dehydrogenase fogD (286 aa).

Positions 8, 34, 55, 147, 151, 180, and 182 each coordinate NADP(+). The active-site Proton acceptor is tyrosine 147. The Lowers pKa of active site Tyr role is filled by lysine 151.

The protein belongs to the short-chain dehydrogenases/reductases (SDR) family.

It participates in secondary metabolite biosynthesis. Functionally, short-chain dehydrogenase; part of the gene cluster that mediates the biosynthesis of flavoglaucin and congeners (including aspergin, dihydroauroglaucin and auroglaucin), prenylated salicylaldehyde derivatives carrying a saturated or an unsaturated C-7 side chain. The PKS fogA releases the carboxylic acid (8E,10E,12E)-3,5,7-trihydroxytetradeca-8,10,12-trienoic acid as its product, as well as derivatives with one and two double bonds. FogA is indeed able to reduce the initial triketide, thus being at least partially responsible for the differently saturated heptyl side chains of flavoglaucin congeners. The oxidoreductases fogB, fogC and fogD modify the nascent polyketide in fogA-bound form and, together, fogA, fogB, fogC and fogD are necessary for the formation of the aromatic core and the cyclized PKS products are released as salicyl alcohols. In particular, fogB is responsible for oxidation of a hydroxyl group or reduction of remaining double bond(s) at the C-7 residue whereas fogD is probably involved in the reductive release of the modified PKS products. The cytochrome P450 monooxygenase fogE is then responsible for the hydroxylation at C-3 of the benzene ring. The fogE products are substrates of the prenyltransferase fogH and the prenylated benzyl alcohols are subsequently oxidized by the fogF to produce the final aryl aldehydes flavoglaucin and congeners. The short-chain dehydrogenase fogG does not seem to be involved in the biosynthesis of the prenylated salicylaldehyde derivatives. In Aspergillus ruber (strain CBS 135680), this protein is Short-chain dehydrogenase fogD.